The chain runs to 452 residues: MTDYRTLFSSPGAGSTVTTPITLSLLLLLSQATSDPCYDPGGRPRFCLPPVTQLVGKAAAPCSQTCALPAASPGPACNSSLTLDLDGSFLLTSVTLRFCTAGPPALVLSAAWATGGPWRPLWRRPAWPGALGGPKKVTFHSPPGPKTRIVASYLRVEFGGKAGLVTTGVRGRCQCHGHAARCATRAQPPRCRCRHHTTGPGCESCRPSHRDWPWRPATPQHPHPCLPCQCHPIGATGGMCNQTSGQCSCKLGVTGLTCNRCGPGYQQSRSPRMPCQRIPEATTTPATTPVASRSDPQCQGYCNVSVSSVHMSLQRYCQQDYVLHAQVSASSSQPSEAVGPEWWRLAVHVLAVFKQRAWPVRRGGQEAWVPRADLICGCLRLRPGADYLLLGRAAQTHDDDNYDPARLILNRHGLALPWRPRWARPLRRLQQKERGGACRGLLPPTRSPGPRN.

A signal peptide spans 1–34 (MTDYRTLFSSPGAGSTVTTPITLSLLLLLSQATS). 11 disulfide bridges follow: cysteine 173-cysteine 182, cysteine 175-cysteine 191, cysteine 193-cysteine 202, cysteine 205-cysteine 225, cysteine 228-cysteine 240, cysteine 230-cysteine 247, cysteine 249-cysteine 258, cysteine 261-cysteine 275, cysteine 298-cysteine 376, cysteine 302-cysteine 378, and cysteine 317-cysteine 438. Laminin EGF-like domains follow at residues 173–227 (CQCH…PCLP) and 228–277 (CQCH…PCQR). The region spanning 298-438 (CQGYCNVSVS…LQQKERGGAC (141 aa)) is the NTR domain. Residue asparagine 303 is glycosylated (N-linked (GlcNAc...) asparagine).

It localises to the secreted. Its function is as follows. Plays a role in neurogenesis. Prevents motor neuron cell body migration out of the neural tube. This is Netrin-5 (Ntn5) from Mus musculus (Mouse).